Here is a 529-residue protein sequence, read N- to C-terminus: Bifunctional purine biosynthesis protein PurH (529 aa).

In terms of domain architecture, MGS-like spans 2 to 149; that stretch reads TNLVPVGRAL…KNHRFVNVVT (148 aa).

It belongs to the PurH family.

The enzyme catalyses (6R)-10-formyltetrahydrofolate + 5-amino-1-(5-phospho-beta-D-ribosyl)imidazole-4-carboxamide = 5-formamido-1-(5-phospho-D-ribosyl)imidazole-4-carboxamide + (6S)-5,6,7,8-tetrahydrofolate. It catalyses the reaction IMP + H2O = 5-formamido-1-(5-phospho-D-ribosyl)imidazole-4-carboxamide. It functions in the pathway purine metabolism; IMP biosynthesis via de novo pathway; 5-formamido-1-(5-phospho-D-ribosyl)imidazole-4-carboxamide from 5-amino-1-(5-phospho-D-ribosyl)imidazole-4-carboxamide (10-formyl THF route): step 1/1. Its pathway is purine metabolism; IMP biosynthesis via de novo pathway; IMP from 5-formamido-1-(5-phospho-D-ribosyl)imidazole-4-carboxamide: step 1/1. This Cereibacter sphaeroides (strain ATCC 17029 / ATH 2.4.9) (Rhodobacter sphaeroides) protein is Bifunctional purine biosynthesis protein PurH.